Consider the following 700-residue polypeptide: Methionine--tRNA ligase (700 aa).

The 'HIGH' region motif lies at Pro-12–His-22. Zn(2+) is bound by residues Cys-143, Cys-146, Cys-156, and Cys-159. The short motif at Lys-348–Ser-352 is the 'KMSKS' region element. Lys-351 provides a ligand contact to ATP. The tRNA-binding domain maps to Asp-594–His-700.

The protein belongs to the class-I aminoacyl-tRNA synthetase family. MetG type 1 subfamily. As to quaternary structure, homodimer. Zn(2+) is required as a cofactor.

It is found in the cytoplasm. The catalysed reaction is tRNA(Met) + L-methionine + ATP = L-methionyl-tRNA(Met) + AMP + diphosphate. Its function is as follows. Is required not only for elongation of protein synthesis but also for the initiation of all mRNA translation through initiator tRNA(fMet) aminoacylation. The polypeptide is Methionine--tRNA ligase (Albidiferax ferrireducens (strain ATCC BAA-621 / DSM 15236 / T118) (Rhodoferax ferrireducens)).